The chain runs to 775 residues: ATP-dependent 6-phosphofructokinase 2 (775 aa).

Positions 1–390 (MTNTILDTYS…YHSAYRHLNT (390 aa)) are N-terminal catalytic PFK domain 1. ATP is bound by residues Gly25, 88-89 (RC), and 118-121 (GDGS). Asp119 provides a ligand contact to Mg(2+). Residues 164 to 166 (SID), Arg201, 208 to 210 (MGR), Glu264, Arg292, and 298 to 301 (HIQR) each bind substrate. The active-site Proton acceptor is Asp166. An interdomain linker region spans residues 391-404 (SDHPKMVLPEDKRM). The tract at residues 405–775 (RVAIIHVGAP…GRSSLYAIPN (371 aa)) is C-terminal regulatory PFK domain 2. Beta-D-fructose 2,6-bisphosphate-binding positions include 537–541 (SMSNN), 582–584 (QGA), Asp640, and 672–675 (HFQQ).

The protein belongs to the phosphofructokinase type A (PFKA) family. ATP-dependent PFK group I subfamily. Eukaryotic two domain clade 'E' sub-subfamily. In terms of assembly, homotetramer. Mg(2+) is required as a cofactor.

The protein resides in the cytoplasm. It carries out the reaction beta-D-fructose 6-phosphate + ATP = beta-D-fructose 1,6-bisphosphate + ADP + H(+). It participates in carbohydrate degradation; glycolysis; D-glyceraldehyde 3-phosphate and glycerone phosphate from D-glucose: step 3/4. Allosterically activated by ADP, AMP, or fructose 2,6-bisphosphate, and allosterically inhibited by ATP or citrate. Catalyzes the phosphorylation of D-fructose 6-phosphate to fructose 1,6-bisphosphate by ATP, the first committing step of glycolysis. The polypeptide is ATP-dependent 6-phosphofructokinase 2 (pfkB) (Aspergillus oryzae (strain ATCC 42149 / RIB 40) (Yellow koji mold)).